The following is a 431-amino-acid chain: Serine/threonine-protein kinase Sgk1 (431 aa).

Positions 1 to 60 (MTVKTEAAKGTLTYSRMRGMVAILIAFMKQRRMGLNDFIQKIANNSYACKHPEVQSILKI) are necessary for localization to the mitochondria. Residues 66–92 (PELMNANPSPPPSPSQQINLGPSSNPH) are disordered. Ser-74 is subject to Phosphoserine. Phosphoserine; by MAPK7 is present on Ser-78. Positions 81 to 91 (QQINLGPSSNP) are enriched in polar residues. In terms of domain architecture, Protein kinase spans 98–355 (FHFLKVIGKG…FMEIKSHVFF (258 aa)). ATP-binding positions include 104-112 (IGKGSFGKV) and Lys-127. Residues 131–141 (KKAILKKKEEK) carry the Nuclear localization signal motif. Residue Asp-222 is the Proton acceptor of the active site. Thr-256 carries the phosphothreonine; by PDPK1 modification. The region spanning 356 to 431 (SLINWDDLIN…SYAPPTDSFL (76 aa)) is the AGC-kinase C-terminal domain. Thr-369 carries the post-translational modification Phosphothreonine; by PKA. Phosphoserine is present on residues Ser-397, Ser-401, and Ser-422.

This sequence belongs to the protein kinase superfamily. AGC Ser/Thr protein kinase family. In terms of assembly, homodimer; disulfide-linked. Forms a trimeric complex with FBXW7 and NOTCH1. Interacts with MAPK3/ERK1, MAPK1/ERK2, MAP2K1/MEK1, MAP2K2/MEK2, NEDD4, NEDD4L, MAPT/TAU, MAPK7, CREB1, SLC9A3R2/NHERF2 and KCNJ1/ROMK1. Associates with the mammalian target of rapamycin complex 2 (mTORC2) via an interaction with MAPKAP1/SIN1. Regulated by phosphorylation. Activated by phosphorylation on Ser-422 by mTORC2, transforming it into a substrate for PDPK1 which phosphorylates it on Thr-256. Phosphorylation on Ser-397 and Ser-401 are also essential for its activity. Phosphorylation on Ser-78 by MAPK7 is required for growth factor-induced cell cycle progression. In terms of processing, ubiquitinated by NEDD4L; which promotes proteasomal degradation. Ubiquitinated by SYVN1 at the endoplasmic reticulum; which promotes rapid proteasomal degradation and maintains a high turnover rate in resting cells. Isoform 2 shows enhanced stability. In terms of tissue distribution, expressed in most tissues with highest levels in the pancreas, followed by placenta, kidney and lung. Isoform 2 is strongly expressed in brain and pancreas, weaker in heart, placenta, lung, liver and skeletal muscle.

It localises to the cytoplasm. The protein localises to the nucleus. It is found in the endoplasmic reticulum membrane. Its subcellular location is the cell membrane. The protein resides in the mitochondrion. It catalyses the reaction L-seryl-[protein] + ATP = O-phospho-L-seryl-[protein] + ADP + H(+). The enzyme catalyses L-threonyl-[protein] + ATP = O-phospho-L-threonyl-[protein] + ADP + H(+). Its activity is regulated as follows. Two specific sites, one in the kinase domain (Thr-256) and the other in the C-terminal regulatory region (Ser-422), need to be phosphorylated for its full activation. Phosphorylation at Ser-397 and Ser-401 are also essential for its activity. Activated by WNK1, WNK2, WNK3 and WNK4; which promote phosphorylation by mTORC2. Its function is as follows. Serine/threonine-protein kinase which is involved in the regulation of a wide variety of ion channels, membrane transporters, cellular enzymes, transcription factors, neuronal excitability, cell growth, proliferation, survival, migration and apoptosis. Plays an important role in cellular stress response. Contributes to regulation of renal Na(+) retention, renal K(+) elimination, salt appetite, gastric acid secretion, intestinal Na(+)/H(+) exchange and nutrient transport, insulin-dependent salt sensitivity of blood pressure, salt sensitivity of peripheral glucose uptake, cardiac repolarization and memory consolidation. Up-regulates Na(+) channels: SCNN1A/ENAC, SCN5A and ASIC1/ACCN2, K(+) channels: KCNJ1/ROMK1, KCNA1-5, KCNQ1-5 and KCNE1, epithelial Ca(2+) channels: TRPV5 and TRPV6, chloride channels: BSND, CLCN2 and CFTR, glutamate transporters: SLC1A3/EAAT1, SLC1A2 /EAAT2, SLC1A1/EAAT3, SLC1A6/EAAT4 and SLC1A7/EAAT5, amino acid transporters: SLC1A5/ASCT2, SLC38A1/SN1 and SLC6A19, creatine transporter: SLC6A8, Na(+)/dicarboxylate cotransporter: SLC13A2/NADC1, Na(+)-dependent phosphate cotransporter: SLC34A2/NAPI-2B, glutamate receptor: GRIK2/GLUR6. Up-regulates carriers: SLC9A3/NHE3, SLC12A1/NKCC2, SLC12A3/NCC, SLC5A3/SMIT, SLC2A1/GLUT1, SLC5A1/SGLT1 and SLC15A2/PEPT2. Regulates enzymes: GSK3A/B, PMM2 and Na(+)/K(+) ATPase, and transcription factors: CTNNB1 and nuclear factor NF-kappa-B. Stimulates sodium transport into epithelial cells by enhancing the stability and expression of SCNN1A/ENAC. This is achieved by phosphorylating the NEDD4L ubiquitin E3 ligase, promoting its interaction with 14-3-3 proteins, thereby preventing it from binding to SCNN1A/ENAC and targeting it for degradation. Regulates store-operated Ca(+2) entry (SOCE) by stimulating ORAI1 and STIM1. Regulates KCNJ1/ROMK1 directly via its phosphorylation or indirectly via increased interaction with SLC9A3R2/NHERF2. Phosphorylates MDM2 and activates MDM2-dependent ubiquitination of p53/TP53. Phosphorylates MAPT/TAU and mediates microtubule depolymerization and neurite formation in hippocampal neurons. Phosphorylates SLC2A4/GLUT4 and up-regulates its activity. Phosphorylates APBB1/FE65 and promotes its localization to the nucleus. Phosphorylates MAPK1/ERK2 and activates it by enhancing its interaction with MAP2K1/MEK1 and MAP2K2/MEK2. Phosphorylates FBXW7 and plays an inhibitory role in the NOTCH1 signaling. Phosphorylates FOXO1 resulting in its relocalization from the nucleus to the cytoplasm. Phosphorylates FOXO3, promoting its exit from the nucleus and interference with FOXO3-dependent transcription. Phosphorylates BRAF and MAP3K3/MEKK3 and inhibits their activity. Phosphorylates SLC9A3/NHE3 in response to dexamethasone, resulting in its activation and increased localization at the cell membrane. Phosphorylates CREB1. Necessary for vascular remodeling during angiogenesis. Sustained high levels and activity may contribute to conditions such as hypertension and diabetic nephropathy. Isoform 2 exhibited a greater effect on cell plasma membrane expression of SCNN1A/ENAC and Na(+) transport than isoform 1. This Homo sapiens (Human) protein is Serine/threonine-protein kinase Sgk1 (SGK1).